Consider the following 47-residue polypeptide: Large ribosomal subunit protein bL27c (47 aa).

The disordered stretch occupies residues 1 to 21 (STKNGRDSNAQRLGVKKYGGE).

Belongs to the bacterial ribosomal protein bL27 family.

It is found in the plastid. The protein resides in the chloroplast. The protein is Large ribosomal subunit protein bL27c (rpl27) of Porphyridium purpureum (Red alga).